A 64-amino-acid polypeptide reads, in one-letter code: Makatoxin-1 (64 aa).

An LCN-type CS-alpha/beta domain is found at 2–64; sequence RDAYIADSEN…VPIRISGSCR (63 aa). 4 disulfides stabilise this stretch: Cys12/Cys63, Cys16/Cys36, Cys22/Cys46, and Cys26/Cys48.

As to expression, expressed by the venom gland.

The protein localises to the secreted. Functionally, this protein markedly relaxes the rat carbachol-precontracted anococcygeus muscle. This relaxation is inhibited by the inhibitor of nitric oxide (NO) synthase, N-nitro-L-arginine methyl ester (L-NAME), suggesting that the response induced by this protein is NO-mediated. This Olivierus martensii (Manchurian scorpion) protein is Makatoxin-1.